A 137-amino-acid chain; its full sequence is Large ribosomal subunit protein bL21 (137 aa).

The segment at 1-26 (MADTKTATPATDAEEATATPPAAAPS) is disordered.

The protein belongs to the bacterial ribosomal protein bL21 family. As to quaternary structure, part of the 50S ribosomal subunit. Contacts protein L20.

Functionally, this protein binds to 23S rRNA in the presence of protein L20. This Parasynechococcus marenigrum (strain WH8102) protein is Large ribosomal subunit protein bL21.